A 201-amino-acid polypeptide reads, in one-letter code: Large ribosomal subunit protein uL4 (201 aa).

A disordered region spans residues 45 to 73 (AQKTRAEVTGSGKKPWRQKGTGRARAGSV).

It belongs to the universal ribosomal protein uL4 family. As to quaternary structure, part of the 50S ribosomal subunit.

One of the primary rRNA binding proteins, this protein initially binds near the 5'-end of the 23S rRNA. It is important during the early stages of 50S assembly. It makes multiple contacts with different domains of the 23S rRNA in the assembled 50S subunit and ribosome. Functionally, forms part of the polypeptide exit tunnel. The protein is Large ribosomal subunit protein uL4 of Yersinia pseudotuberculosis serotype O:1b (strain IP 31758).